We begin with the raw amino-acid sequence, 262 residues long: MTDPTPAAVDLDLLAEPRLVVEPGLGARVAAVAGPVLQGMGYRLVRIKVSGELGCTVQIMAERPDGTMLVEDCEAISHALSPVLDIADPVERAYRLEISSPGIDRPLVRRSDFERYEGYLVKIEMAVAVGGRKRFRGLLGPLQGDAVLLAREGARDGEDPNSLLPLEDIASANLVLTDELIAESMRRGKIAEREMKRELGVLPPPPPHAKKSDPTKSNAPKAKLPKAKLKAAKKPPPTNTKEHRLAAAERKRLGQTDPTEGD.

Residues 197-262 (RELGVLPPPP…LGQTDPTEGD (66 aa)) form a disordered region. Residues 223–233 (KLPKAKLKAAK) show a composition bias toward basic residues. The segment covering 240-254 (TKEHRLAAAERKRLG) has biased composition (basic and acidic residues).

The protein belongs to the RimP family.

The protein localises to the cytoplasm. Functionally, required for maturation of 30S ribosomal subunits. The protein is Ribosome maturation factor RimP of Rhodopseudomonas palustris (strain BisB18).